The following is a 61-amino-acid chain: Large ribosomal subunit protein bL32 (61 aa).

Positions Met1 to Val22 are disordered. Over residues Lys7 to Gln20 the composition is skewed to basic residues.

The protein belongs to the bacterial ribosomal protein bL32 family.

In Desulforapulum autotrophicum (strain ATCC 43914 / DSM 3382 / VKM B-1955 / HRM2) (Desulfobacterium autotrophicum), this protein is Large ribosomal subunit protein bL32.